The primary structure comprises 527 residues: GMP synthase [glutamine-hydrolyzing] (527 aa).

One can recognise a Glutamine amidotransferase type-1 domain in the interval 19–212 (KIIVLDYGSQ…AFSICGAKGD (194 aa)). The Nucleophile role is filled by C96. Catalysis depends on residues H186 and E188. A GMPS ATP-PPase domain is found at 213–402 (WSMANFVDMQ…LGMPDEVVWR (190 aa)). An ATP-binding site is contributed by 240 to 246 (SGGVDSS).

Homodimer.

It carries out the reaction XMP + L-glutamine + ATP + H2O = GMP + L-glutamate + AMP + diphosphate + 2 H(+). Its pathway is purine metabolism; GMP biosynthesis; GMP from XMP (L-Gln route): step 1/1. Catalyzes the synthesis of GMP from XMP. The polypeptide is GMP synthase [glutamine-hydrolyzing] (Streptococcus thermophilus (strain CNRZ 1066)).